The sequence spans 434 residues: Perilipin-3 (434 aa).

The segment at 1 to 22 (MSADGAEADGSTQVTVEEPVQQ) is disordered. Ser2 carries the post-translational modification N-acetylserine. Residue Ser31 is modified to Phosphoserine. Position 65 is an N6-acetyllysine (Lys65). Ser91 is subject to Phosphoserine. A Glycyl lysine isopeptide (Lys-Gly) (interchain with G-Cter in SUMO1) cross-link involves residue Lys122. Phosphoserine occurs at positions 130 and 148. Residue Thr170 is modified to Phosphothreonine. Phosphoserine occurs at positions 175 and 179. Thr216 is modified (phosphothreonine). Phosphoserine occurs at positions 217 and 241. Tyr251 is subject to Phosphotyrosine. 2 coiled-coil regions span residues 252 to 280 (EHSL…SLME) and 353 to 377 (TNVK…SSIH).

This sequence belongs to the perilipin family. In terms of assembly, homooligomer. Interacts with M6PR (via the cytoplasmic domain). Interacts with IGF2R (via the cytoplasmic domain). Post-translationally, phosphorylation at Tyr-251 by isoform 1 of CHKA (CHKalpha2) promotes dissociation from lipid droplets: dissociation is followed by recruitment of autophagosome machinery to lipid droplets and subsequent lipid droplet lipolysis.

It is found in the lipid droplet. It localises to the endosome membrane. The protein localises to the cytoplasm. In terms of biological role, structural component of lipid droplets, which is required for the formation and maintenance of lipid storage droplets. Required for the transport of mannose 6-phosphate receptors (MPR) from endosomes to the trans-Golgi network. In Pongo abelii (Sumatran orangutan), this protein is Perilipin-3 (PLIN3).